Reading from the N-terminus, the 592-residue chain is NADH-quinone oxidoreductase subunit C/D (592 aa).

Positions 1–183 (MLTEFNSIPA…GPYILTEEKE (183 aa)) are NADH dehydrogenase I subunit C. The NADH dehydrogenase I subunit D stretch occupies residues 207–592 (DFMFLNLGPN…IDFVMADVDR (386 aa)).

This sequence in the N-terminal section; belongs to the complex I 30 kDa subunit family. It in the C-terminal section; belongs to the complex I 49 kDa subunit family. NDH-1 is composed of 13 different subunits. Subunits NuoB, CD, E, F, and G constitute the peripheral sector of the complex.

The protein localises to the cell inner membrane. The enzyme catalyses a quinone + NADH + 5 H(+)(in) = a quinol + NAD(+) + 4 H(+)(out). In terms of biological role, NDH-1 shuttles electrons from NADH, via FMN and iron-sulfur (Fe-S) centers, to quinones in the respiratory chain. The immediate electron acceptor for the enzyme in this species is believed to be ubiquinone. Couples the redox reaction to proton translocation (for every two electrons transferred, four hydrogen ions are translocated across the cytoplasmic membrane), and thus conserves the redox energy in a proton gradient. This Acidiphilium cryptum (strain JF-5) protein is NADH-quinone oxidoreductase subunit C/D.